The primary structure comprises 1234 residues: DNA-directed RNA polymerase subunit beta (1234 aa).

The disordered stretch occupies residues 1189-1212; sequence VLSSQDNDYEEPEENDEEDELNLD. The segment covering 1195–1212 has biased composition (acidic residues); it reads NDYEEPEENDEEDELNLD.

It belongs to the RNA polymerase beta chain family. The RNAP catalytic core consists of 2 alpha, 1 beta, 1 beta' and 1 omega subunit. When a sigma factor is associated with the core the holoenzyme is formed, which can initiate transcription.

It carries out the reaction RNA(n) + a ribonucleoside 5'-triphosphate = RNA(n+1) + diphosphate. DNA-dependent RNA polymerase catalyzes the transcription of DNA into RNA using the four ribonucleoside triphosphates as substrates. In Clostridium kluyveri (strain NBRC 12016), this protein is DNA-directed RNA polymerase subunit beta.